A 351-amino-acid chain; its full sequence is Thiamine-phosphate synthase (351 aa).

The segment at 1-129 (MVEPYSQKEQ…AKACKQMRYQ (129 aa)) is unknown. The disordered stretch occupies residues 65-85 (LRAARDTPGDPGTELTHPQEE). The interval 130–351 (VYTLESNLMG…SQLNRIKPEL (222 aa)) is thiamine-phosphate synthase. 4-amino-2-methyl-5-(diphosphooxymethyl)pyrimidine contacts are provided by residues 177–181 (QYRDK) and Asn209. Positions 210 and 229 each coordinate Mg(2+). Ser248 is a binding site for 4-amino-2-methyl-5-(diphosphooxymethyl)pyrimidine. 2-[(2R,5Z)-2-carboxy-4-methylthiazol-5(2H)-ylidene]ethyl phosphate is bound at residue 274–276 (TPT). Lys277 is a binding site for 4-amino-2-methyl-5-(diphosphooxymethyl)pyrimidine. Gly304 lines the 2-[(2R,5Z)-2-carboxy-4-methylthiazol-5(2H)-ylidene]ethyl phosphate pocket.

It belongs to the thiamine-phosphate synthase family. Mg(2+) serves as cofactor.

It catalyses the reaction 2-[(2R,5Z)-2-carboxy-4-methylthiazol-5(2H)-ylidene]ethyl phosphate + 4-amino-2-methyl-5-(diphosphooxymethyl)pyrimidine + 2 H(+) = thiamine phosphate + CO2 + diphosphate. It carries out the reaction 2-(2-carboxy-4-methylthiazol-5-yl)ethyl phosphate + 4-amino-2-methyl-5-(diphosphooxymethyl)pyrimidine + 2 H(+) = thiamine phosphate + CO2 + diphosphate. The enzyme catalyses 4-methyl-5-(2-phosphooxyethyl)-thiazole + 4-amino-2-methyl-5-(diphosphooxymethyl)pyrimidine + H(+) = thiamine phosphate + diphosphate. The protein operates within cofactor biosynthesis; thiamine diphosphate biosynthesis; thiamine phosphate from 4-amino-2-methyl-5-diphosphomethylpyrimidine and 4-methyl-5-(2-phosphoethyl)-thiazole: step 1/1. In terms of biological role, condenses 4-methyl-5-(beta-hydroxyethyl)thiazole monophosphate (THZ-P) and 2-methyl-4-amino-5-hydroxymethyl pyrimidine pyrophosphate (HMP-PP) to form thiamine monophosphate (TMP). This is Thiamine-phosphate synthase from Nostoc punctiforme (strain ATCC 29133 / PCC 73102).